The following is a 145-amino-acid chain: Mannitol-specific phosphotransferase enzyme IIA component (145 aa).

In terms of domain architecture, PTS EIIA type-2 spans 4 to 143; that stretch reads TILSTETIKV…QEVLAFLGEV (140 aa). The active-site Tele-phosphohistidine intermediate is histidine 64. Position 64 is a phosphohistidine; by HPr (histidine 64).

It localises to the cytoplasm. In terms of biological role, the phosphoenolpyruvate-dependent sugar phosphotransferase system (sugar PTS), a major carbohydrate active transport system, catalyzes the phosphorylation of incoming sugar substrates concomitantly with their translocation across the cell membrane. The enzyme II CmtAB PTS system is involved in D-mannitol transport. In Halalkalibacterium halodurans (strain ATCC BAA-125 / DSM 18197 / FERM 7344 / JCM 9153 / C-125) (Bacillus halodurans), this protein is Mannitol-specific phosphotransferase enzyme IIA component (mtlF).